The following is a 240-amino-acid chain: ATP-dependent dethiobiotin synthetase BioD 1 (240 aa).

Residue 13 to 18 (DVGKTV) participates in ATP binding. Thr-17 contributes to the Mg(2+) binding site. Residue Lys-38 is part of the active site. Ser-42 serves as a coordination point for substrate. Residues Asp-55, 116–119 (EGAG), 176–177 (NE), 205–207 (PYL), and Glu-212 each bind ATP. Residues Asp-55 and Glu-116 each contribute to the Mg(2+) site.

This sequence belongs to the dethiobiotin synthetase family. Homodimer. Mg(2+) is required as a cofactor.

Its subcellular location is the cytoplasm. The enzyme catalyses (7R,8S)-7,8-diammoniononanoate + CO2 + ATP = (4R,5S)-dethiobiotin + ADP + phosphate + 3 H(+). It functions in the pathway cofactor biosynthesis; biotin biosynthesis; biotin from 7,8-diaminononanoate: step 1/2. Its function is as follows. Catalyzes a mechanistically unusual reaction, the ATP-dependent insertion of CO2 between the N7 and N8 nitrogen atoms of 7,8-diaminopelargonic acid (DAPA, also called 7,8-diammoniononanoate) to form a ureido ring. This is ATP-dependent dethiobiotin synthetase BioD 1 from Yersinia pestis.